The following is a 127-amino-acid chain: Fumarate reductase subunit C (127 aa).

A run of 3 helical transmembrane segments spans residues 30-50 (ATIL…GSLV), 67-87 (IVVA…QTFF), and 107-127 (VVVL…LVIV).

It belongs to the FrdC family. Part of an enzyme complex containing four subunits: a flavoprotein (FrdA), an iron-sulfur protein (FrdB), and two hydrophobic anchor proteins (FrdC and FrdD).

The protein localises to the cell inner membrane. Functionally, anchors the catalytic components of the fumarate reductase complex to the cell membrane, binds quinones. The chain is Fumarate reductase subunit C from Aliivibrio salmonicida (strain LFI1238) (Vibrio salmonicida (strain LFI1238)).